A 332-amino-acid polypeptide reads, in one-letter code: Formamidase (332 aa).

The region spanning 14 to 259 (FLAALIQYPV…WEIVTAEVYP (246 aa)) is the CN hydrolase domain. The active-site Proton acceptor is the glutamate 60. Residue lysine 132 is the Proton donor of the active site. Catalysis depends on cysteine 165, which acts as the Nucleophile.

It belongs to the carbon-nitrogen hydrolase superfamily. Aliphatic amidase family.

It catalyses the reaction formamide + H2O = formate + NH4(+). Functionally, is an aliphatic amidase with a restricted substrate specificity, as it only hydrolyzes formamide. The protein is Formamidase of Bacillus cereus (strain Q1).